We begin with the raw amino-acid sequence, 689 residues long: DNA ligase (689 aa).

NAD(+)-binding positions include 40–44, 89–90, and Glu121; these read DSEYD and SL. The active-site N6-AMP-lysine intermediate is the Lys123. Arg144, Glu179, Lys295, and Lys319 together coordinate NAD(+). Zn(2+)-binding residues include Cys413, Cys416, Cys431, and Cys437. Residues 610 to 689 enclose the BRCT domain; that stretch reads REQSSLTDKI…EEWLTLIKNV (80 aa).

Belongs to the NAD-dependent DNA ligase family. LigA subfamily. Requires Mg(2+) as cofactor. Mn(2+) is required as a cofactor.

The catalysed reaction is NAD(+) + (deoxyribonucleotide)n-3'-hydroxyl + 5'-phospho-(deoxyribonucleotide)m = (deoxyribonucleotide)n+m + AMP + beta-nicotinamide D-nucleotide.. Its function is as follows. DNA ligase that catalyzes the formation of phosphodiester linkages between 5'-phosphoryl and 3'-hydroxyl groups in double-stranded DNA using NAD as a coenzyme and as the energy source for the reaction. It is essential for DNA replication and repair of damaged DNA. This Rickettsia rickettsii (strain Iowa) protein is DNA ligase.